We begin with the raw amino-acid sequence, 220 residues long: Deoxyribose-phosphate aldolase (220 aa).

The Proton donor/acceptor role is filled by Asp89. Lys151 functions as the Schiff-base intermediate with acetaldehyde in the catalytic mechanism. Lys180 (proton donor/acceptor) is an active-site residue.

Belongs to the DeoC/FbaB aldolase family. DeoC type 1 subfamily.

Its subcellular location is the cytoplasm. It carries out the reaction 2-deoxy-D-ribose 5-phosphate = D-glyceraldehyde 3-phosphate + acetaldehyde. The protein operates within carbohydrate degradation; 2-deoxy-D-ribose 1-phosphate degradation; D-glyceraldehyde 3-phosphate and acetaldehyde from 2-deoxy-alpha-D-ribose 1-phosphate: step 2/2. In terms of biological role, catalyzes a reversible aldol reaction between acetaldehyde and D-glyceraldehyde 3-phosphate to generate 2-deoxy-D-ribose 5-phosphate. This Streptococcus gordonii (strain Challis / ATCC 35105 / BCRC 15272 / CH1 / DL1 / V288) protein is Deoxyribose-phosphate aldolase.